The sequence spans 221 residues: Holliday junction branch migration complex subunit RuvA (221 aa).

Residues 1–61 (MQIYQFGKIV…DYTKITYGFA (61 aa)) are domain I. A domain II region spans residues 62–139 (SFRERILFED…RFNENHKNQT (78 aa)). Residues 133–155 (ENHKNQTEETNQDSQEKELEKKD) form a disordered region. Residues 140–166 (EETNQDSQEKELEKKDDLADITIQKSN) are flexible linker. Positions 146-155 (SQEKELEKKD) are enriched in basic and acidic residues. The interval 167 to 221 (LEDKTAANLEDTLKMLGFKPRQIDYALTKVEPNENFENLIENAIKIISNAREFRN) is domain III.

It belongs to the RuvA family. Homotetramer. Forms an RuvA(8)-RuvB(12)-Holliday junction (HJ) complex. HJ DNA is sandwiched between 2 RuvA tetramers; dsDNA enters through RuvA and exits via RuvB. An RuvB hexamer assembles on each DNA strand where it exits the tetramer. Each RuvB hexamer is contacted by two RuvA subunits (via domain III) on 2 adjacent RuvB subunits; this complex drives branch migration. In the full resolvosome a probable DNA-RuvA(4)-RuvB(12)-RuvC(2) complex forms which resolves the HJ.

The protein resides in the cytoplasm. The RuvA-RuvB-RuvC complex processes Holliday junction (HJ) DNA during genetic recombination and DNA repair, while the RuvA-RuvB complex plays an important role in the rescue of blocked DNA replication forks via replication fork reversal (RFR). RuvA specifically binds to HJ cruciform DNA, conferring on it an open structure. The RuvB hexamer acts as an ATP-dependent pump, pulling dsDNA into and through the RuvAB complex. HJ branch migration allows RuvC to scan DNA until it finds its consensus sequence, where it cleaves and resolves the cruciform DNA. This is Holliday junction branch migration complex subunit RuvA from Mesomycoplasma hyopneumoniae (strain J / ATCC 25934 / NCTC 10110) (Mycoplasma hyopneumoniae).